The following is a 100-amino-acid chain: Urease subunit gamma (100 aa).

This sequence belongs to the urease gamma subunit family. In terms of assembly, heterotrimer of UreA (gamma), UreB (beta) and UreC (alpha) subunits. Three heterotrimers associate to form the active enzyme.

The protein resides in the cytoplasm. The catalysed reaction is urea + 2 H2O + H(+) = hydrogencarbonate + 2 NH4(+). The protein operates within nitrogen metabolism; urea degradation; CO(2) and NH(3) from urea (urease route): step 1/1. The chain is Urease subunit gamma from Escherichia coli.